We begin with the raw amino-acid sequence, 216 residues long: MTSKNYNYHVTHFVTSAPDIRHLPGDEGIEVAFAGRSNAGKSSALNTLTNQKGLARTSKTPGRTQLINLFEVEEGIRLVDLPGYGYAEVPEEMKRKWQRALGEYLQMRNCLKGLVVLMDIRHPLKDLDQQMIQWAVEVGTPVLLLLTKADKLASGARKAQLNMVREAVVPFMGDIQVEAFSSPKKIGVDKLSQKLNTWFNEIPPEVLPEDDDTAGE.

The 175-residue stretch at 27–201 (EGIEVAFAGR…SQKLNTWFNE (175 aa)) folds into the EngB-type G domain. GTP contacts are provided by residues 35 to 42 (GRSNAGKS), 62 to 66 (GRTQL), 80 to 83 (DLPG), 147 to 150 (TKAD), and 180 to 182 (FSS). Mg(2+) contacts are provided by Ser-42 and Thr-64.

The protein belongs to the TRAFAC class TrmE-Era-EngA-EngB-Septin-like GTPase superfamily. EngB GTPase family. The cofactor is Mg(2+).

Functionally, necessary for normal cell division and for the maintenance of normal septation. This Serratia proteamaculans (strain 568) protein is Probable GTP-binding protein EngB.